The sequence spans 555 residues: MALRAAVFDLDGVLALPSITTSWARAEEKLALPRGFLNEAFKKGGQDGSVARVMTGEITFSQWVPFMEEDCRKCAEDSGIRLPENFSVKHIFDKALSEKKINYPMLQAALTLKKKGFSTCILTNNWLDDSAQRGSRAQLMCELRPHFDFLIESCRVGMAKPDPQIYKLMLDTLKAEPNEVVFLDDVGTHLKPVRDLGMATILVRDTDTALRELEKVTGVQLLQTPALPPTSCDPSALSHGYVLIKPGVRLHFVEMGSGPAVCLCHGFPESWFSWRYQIPALAQAGFRVLAVDMKGYGESSAPPEIEEYSLEVLCKDMVTFLNKLGLSQAVFIGHDWGGVLVWNMALFYPERVRAVASLNTPFMPSNPNVSPMEIIKANPVFDYQLYFQEPGVAEAELEQNLDRTFKNFFRAHDETFLTTNRVRELGGLFVGTPEEPSLSRLVTEEDIQFYVQQFKKSGFRGPLNWYRNMERNWQWGCKGSGRKILIPALMVTAENDLVLHPKMSKHMENWIPHLKRGHIKDCGHWTQIDKPAELNRILIEWLETDARNPLVDSKL.

The segment at 1 to 224 (MALRAAVFDL…KVTGVQLLQT (224 aa)) is phosphatase. Positions 9 and 11 each coordinate Mg(2+). Lys-43 is modified (N6-acetyllysine). 123-124 (TN) serves as a coordination point for phosphate. Asp-185 is a binding site for Mg(2+). N6-acetyllysine occurs at positions 191 and 215. An epoxide hydrolase region spans residues 235-555 (SALSHGYVLI…ARNPLVDSKL (321 aa)). Residues 259-531 (PAVCLCHGFP…CGHWTQIDKP (273 aa)) form the AB hydrolase-1 domain. Asp-335 acts as the Nucleophile in catalysis. Ser-370 is modified (phosphoserine). Substrate is bound at residue Tyr-383. Lys-455 bears the N6-succinyllysine mark. Tyr-466 functions as the Proton donor in the catalytic mechanism. N6-succinyllysine is present on Lys-505. Cys-522 carries S-(15-deoxy-Delta12,14-prostaglandin J2-9-yl)cysteine lipidation. The active-site Proton acceptor is His-524. Positions 553-555 (SKL) match the Microbody targeting signal motif. N6-succinyllysine is present on Lys-554.

This sequence belongs to the AB hydrolase superfamily. Epoxide hydrolase family. In terms of assembly, homodimer. Mg(2+) is required as a cofactor. The covalent modification of cysteine by 15-deoxy-Delta12,14-prostaglandin-J2 is autocatalytic and reversible. It may occur as an alternative to other cysteine modifications, such as S-nitrosylation and S-palmitoylation.

Its subcellular location is the cytoplasm. It is found in the peroxisome. It carries out the reaction an epoxide + H2O = an ethanediol. The catalysed reaction is (9S,10S)-10-hydroxy-9-(phosphooxy)octadecanoate + H2O = (9S,10S)-9,10-dihydroxyoctadecanoate + phosphate. The enzyme catalyses (14R,15S)-epoxy-(5Z,8Z,11Z)-eicosatrienoate + H2O = (14R,15R)-dihydroxy-(5Z,8Z,11Z)-eicosatrienoate. With respect to regulation, inhibited by 1-(1-acetylpiperidin-4-yl)-3-(4-(trifl uoromethoxy)phenyl)urea (TPAU), 1-cyclohexyl-3-dodecylurea (CDU), 12-(3-adamantan-1-yl-ureido)-dodecanoic acid (AUDA), 1-((3S, 5S, 7S)-adamantan-1-yl)-3-(5-(2-(2-ethoxyethoxy) ethoxy)pentyl)urea (AEPU), N-adamantyl-N[']-cyclohexyl urea (ACU), 4-(((1S, 4S)-4-(3-((3S, 5S, 7S)-adamantan-1-yl) ureido)cyclohexyl)oxy)benzoic acid (c-AUCB), 4-(((1R, 4R)-4-(3-((3S, 5S, 7S)-adamantan-1-yl)ureido)cyclohexyl)oxy)benzoic acid (t-AUCB), 4-(((1R, 4R)-4-(3-(4(trifluoromethoxy)phenyl)ureido)cyclohexyl)oxy)benzoic acid (t-TAUCB) and to a lesser extent by 8-(3-((3S, 5S, 7S)-adamantan-1-yl)ureido) octanoic acid (AUOA). Bifunctional enzyme. The C-terminal domain has epoxide hydrolase activity and acts on epoxides (alkene oxides, oxiranes) and arene oxides. Plays a role in xenobiotic metabolism by degrading potentially toxic epoxides. Also determines steady-state levels of physiological mediators. The N-terminal domain has lipid phosphatase activity, with the highest activity towards threo-9,10-phosphonooxy-hydroxy-octadecanoic acid, followed by erythro-9,10-phosphonooxy-hydroxy-octadecanoic acid, 12-phosphonooxy-octadec-9Z-enoic acid and 12-phosphonooxy-octadec-9E-enoic acid. The sequence is that of Bifunctional epoxide hydrolase 2 (EPHX2) from Sus scrofa (Pig).